A 236-amino-acid polypeptide reads, in one-letter code: Leucyl/phenylalanyl-tRNA--protein transferase (236 aa).

Belongs to the L/F-transferase family.

Its subcellular location is the cytoplasm. It carries out the reaction N-terminal L-lysyl-[protein] + L-leucyl-tRNA(Leu) = N-terminal L-leucyl-L-lysyl-[protein] + tRNA(Leu) + H(+). The catalysed reaction is N-terminal L-arginyl-[protein] + L-leucyl-tRNA(Leu) = N-terminal L-leucyl-L-arginyl-[protein] + tRNA(Leu) + H(+). It catalyses the reaction L-phenylalanyl-tRNA(Phe) + an N-terminal L-alpha-aminoacyl-[protein] = an N-terminal L-phenylalanyl-L-alpha-aminoacyl-[protein] + tRNA(Phe). Functionally, functions in the N-end rule pathway of protein degradation where it conjugates Leu, Phe and, less efficiently, Met from aminoacyl-tRNAs to the N-termini of proteins containing an N-terminal arginine or lysine. The sequence is that of Leucyl/phenylalanyl-tRNA--protein transferase from Shewanella loihica (strain ATCC BAA-1088 / PV-4).